The primary structure comprises 274 residues: Diaminopimelate epimerase (274 aa).

Substrate contacts are provided by asparagine 11, glutamine 44, and asparagine 64. Cysteine 73 serves as the catalytic Proton donor. Substrate is bound by residues glycine 74–asparagine 75, asparagine 157, asparagine 190, and glutamate 208–arginine 209. Cysteine 217 (proton acceptor) is an active-site residue. Glycine 218–serine 219 lines the substrate pocket.

The protein belongs to the diaminopimelate epimerase family. As to quaternary structure, homodimer.

It localises to the cytoplasm. It carries out the reaction (2S,6S)-2,6-diaminopimelate = meso-2,6-diaminopimelate. It participates in amino-acid biosynthesis; L-lysine biosynthesis via DAP pathway; DL-2,6-diaminopimelate from LL-2,6-diaminopimelate: step 1/1. Catalyzes the stereoinversion of LL-2,6-diaminopimelate (L,L-DAP) to meso-diaminopimelate (meso-DAP), a precursor of L-lysine and an essential component of the bacterial peptidoglycan. In Escherichia coli O127:H6 (strain E2348/69 / EPEC), this protein is Diaminopimelate epimerase.